We begin with the raw amino-acid sequence, 145 residues long: D-aminoacyl-tRNA deacylase (145 aa).

Positions 137-138 (GP) match the Gly-cisPro motif, important for rejection of L-amino acids motif.

Belongs to the DTD family. In terms of assembly, homodimer.

The protein localises to the cytoplasm. The catalysed reaction is glycyl-tRNA(Ala) + H2O = tRNA(Ala) + glycine + H(+). It carries out the reaction a D-aminoacyl-tRNA + H2O = a tRNA + a D-alpha-amino acid + H(+). In terms of biological role, an aminoacyl-tRNA editing enzyme that deacylates mischarged D-aminoacyl-tRNAs. Also deacylates mischarged glycyl-tRNA(Ala), protecting cells against glycine mischarging by AlaRS. Acts via tRNA-based rather than protein-based catalysis; rejects L-amino acids rather than detecting D-amino acids in the active site. By recycling D-aminoacyl-tRNA to D-amino acids and free tRNA molecules, this enzyme counteracts the toxicity associated with the formation of D-aminoacyl-tRNA entities in vivo and helps enforce protein L-homochirality. This Ectopseudomonas mendocina (strain ymp) (Pseudomonas mendocina) protein is D-aminoacyl-tRNA deacylase.